Consider the following 188-residue polypeptide: Peptidyl-tRNA hydrolase (188 aa).

Tyr14 provides a ligand contact to tRNA. Residue His19 is the Proton acceptor of the active site. TRNA is bound by residues Tyr64, Asn66, and Asn113.

It belongs to the PTH family. As to quaternary structure, monomer.

The protein localises to the cytoplasm. The catalysed reaction is an N-acyl-L-alpha-aminoacyl-tRNA + H2O = an N-acyl-L-amino acid + a tRNA + H(+). Hydrolyzes ribosome-free peptidyl-tRNAs (with 1 or more amino acids incorporated), which drop off the ribosome during protein synthesis, or as a result of ribosome stalling. In terms of biological role, catalyzes the release of premature peptidyl moieties from peptidyl-tRNA molecules trapped in stalled 50S ribosomal subunits, and thus maintains levels of free tRNAs and 50S ribosomes. This is Peptidyl-tRNA hydrolase from Chloroflexus aurantiacus (strain ATCC 29364 / DSM 637 / Y-400-fl).